Reading from the N-terminus, the 175-residue chain is Small ribosomal subunit protein uS7 (175 aa).

This sequence belongs to the universal ribosomal protein uS7 family. As to quaternary structure, part of the 30S ribosomal subunit. Contacts proteins S9 and S11.

In terms of biological role, one of the primary rRNA binding proteins, it binds directly to 16S rRNA where it nucleates assembly of the head domain of the 30S subunit. Is located at the subunit interface close to the decoding center, probably blocks exit of the E-site tRNA. This chain is Small ribosomal subunit protein uS7, found in Neorickettsia sennetsu (strain ATCC VR-367 / Miyayama) (Ehrlichia sennetsu).